Consider the following 370-residue polypeptide: tRNA (guanine(9)-/adenine(9)-N1)-methyltransferase (370 aa).

The 206-residue stretch at 87–292 (TPEELREKLP…KELPKRATRY (206 aa)) folds into the SAM-dependent MTase TRM10-type domain.

This sequence belongs to the class IV-like SAM-binding methyltransferase superfamily. TRM10 family.

It localises to the cytoplasm. The enzyme catalyses adenosine(9) in tRNA + S-adenosyl-L-methionine = N(1)-methyladenosine(9) in tRNA + S-adenosyl-L-homocysteine + H(+). It catalyses the reaction guanosine(9) in tRNA + S-adenosyl-L-methionine = N(1)-methylguanosine(9) in tRNA + S-adenosyl-L-homocysteine + H(+). Its function is as follows. Catalyzes the S-adenosyl-L-methionine-dependent formation of either N(1)-methyladenine or N(1)-methylguanine at position 9 (m1A9 or m1G9) in tRNA. In Thermococcus kodakarensis (strain ATCC BAA-918 / JCM 12380 / KOD1) (Pyrococcus kodakaraensis (strain KOD1)), this protein is tRNA (guanine(9)-/adenine(9)-N1)-methyltransferase.